A 616-amino-acid polypeptide reads, in one-letter code: Dihydroxy-acid dehydratase (616 aa).

Asp81 provides a ligand contact to Mg(2+). A [2Fe-2S] cluster-binding site is contributed by Cys122. Mg(2+)-binding residues include Asp123 and Lys124. Lys124 is subject to N6-carboxylysine. Residue Cys195 participates in [2Fe-2S] cluster binding. Glu491 contributes to the Mg(2+) binding site. Ser517 acts as the Proton acceptor in catalysis.

Belongs to the IlvD/Edd family. As to quaternary structure, homodimer. [2Fe-2S] cluster serves as cofactor. The cofactor is Mg(2+).

The catalysed reaction is (2R)-2,3-dihydroxy-3-methylbutanoate = 3-methyl-2-oxobutanoate + H2O. It catalyses the reaction (2R,3R)-2,3-dihydroxy-3-methylpentanoate = (S)-3-methyl-2-oxopentanoate + H2O. The protein operates within amino-acid biosynthesis; L-isoleucine biosynthesis; L-isoleucine from 2-oxobutanoate: step 3/4. It participates in amino-acid biosynthesis; L-valine biosynthesis; L-valine from pyruvate: step 3/4. In terms of biological role, functions in the biosynthesis of branched-chain amino acids. Catalyzes the dehydration of (2R,3R)-2,3-dihydroxy-3-methylpentanoate (2,3-dihydroxy-3-methylvalerate) into 2-oxo-3-methylpentanoate (2-oxo-3-methylvalerate) and of (2R)-2,3-dihydroxy-3-methylbutanoate (2,3-dihydroxyisovalerate) into 2-oxo-3-methylbutanoate (2-oxoisovalerate), the penultimate precursor to L-isoleucine and L-valine, respectively. This is Dihydroxy-acid dehydratase from Salmonella newport (strain SL254).